We begin with the raw amino-acid sequence, 157 residues long: Cuticle protein 19 (157 aa).

A run of 6 repeats spans residues 11–14 (AAPA), 18–21 (AAPA), 24–27 (AAPA), 29–32 (AAPA), 39–42 (AAPA), and 47–50 (AAPA). The Chitin-binding type R&amp;R domain occupies 56–127 (YPKYAFEYGV…SGPSAHPAPA (72 aa)). Copy 7 of the repeat occupies 141-144 (AAPA).

In terms of biological role, component of the cuticle of migratory locust which contains more than 100 different structural proteins. In Locusta migratoria (Migratory locust), this protein is Cuticle protein 19.